The primary structure comprises 226 residues: CASP-like protein 2BC1 (226 aa).

At 1–37 (MRKHIDIVFSRLSGPILNPPPDNNVIPKTDRKLRITE) the chain is on the cytoplasmic side. A helical membrane pass occupies residues 38 to 58 (VILRFAVVIFALVSAIMVGTA). The Extracellular segment spans residues 59–78 (SGTRDLGGGIRIHAHFTLLK). The chain crosses the membrane as a helical span at residues 79–99 (TLPFLVIVDGILAVYSLLQGL). Residues 100–114 (RCFLSLYMRHILLNK) are Cytoplasmic-facing. The chain crosses the membrane as a helical span at residues 115–135 (ALAWTIFCCDQALAYVIFAAA). At 136–170 (ASTAETAYISEQGLDELQWIKVCMFFRAYCFKSGA) the chain is on the extracellular side. A helical transmembrane segment spans residues 171–191 (GMINAFLAALCMVFVSGMSVF). Residues 192–226 (HLFRLYGEKRAYGHIAEQVVISEEAAERRNSLNGI) lie on the Cytoplasmic side of the membrane.

This sequence belongs to the Casparian strip membrane proteins (CASP) family. As to quaternary structure, homodimer and heterodimers.

Its subcellular location is the cell membrane. This chain is CASP-like protein 2BC1, found in Picea sitchensis (Sitka spruce).